Consider the following 190-residue polypeptide: GTP cyclohydrolase 1 (190 aa).

Residues cysteine 80, histidine 83, and cysteine 151 each coordinate Zn(2+).

It belongs to the GTP cyclohydrolase I family. Toroid-shaped homodecamer, composed of two pentamers of five dimers.

It catalyses the reaction GTP + H2O = 7,8-dihydroneopterin 3'-triphosphate + formate + H(+). Its pathway is cofactor biosynthesis; 7,8-dihydroneopterin triphosphate biosynthesis; 7,8-dihydroneopterin triphosphate from GTP: step 1/1. The sequence is that of GTP cyclohydrolase 1 from Rickettsia felis (strain ATCC VR-1525 / URRWXCal2) (Rickettsia azadi).